A 255-amino-acid chain; its full sequence is MQIMDYQFPYCSYPYNFSDKIKFCIGKIVCKTFDVIGIKIYSKITGIYLEPEKISSYNLSDTNHQISNEKNLIYSNIKWLIVGITIIPTIYYGTKLQYIPESKLWYIGTPLVFMNLFNTLSHICQYIQLKLHTDKLKHNIEITNSLENPICILDSIDYDSIISTRKLIWSTTKVNHNYVVYNAFYSDLFFVFDREKMLNDFILEKLSKLSENDIDCLANDPSRNRLVQQMQDEFIRNKLYLLLMQCYRHQYTNSS.

N-linked (GlcNAc...) asparagine; by host glycosylation is found at Asn16 and Asn58. The next 2 helical transmembrane spans lie at 72 to 92 (LIYS…TIYY) and 104 to 124 (LWYI…SHIC).

Its subcellular location is the membrane. This is an uncharacterized protein from Acanthamoeba polyphaga (Amoeba).